The following is a 428-amino-acid chain: Putative aminotransferase MSMEG_6286/MSMEI_6121 (428 aa).

Gly-37 contacts substrate. Pyridoxal 5'-phosphate-binding positions include Tyr-72, 102 to 105 (ASLE), Asn-191, 222 to 225 (AYAV), and 256 to 258 (STS). Lys-339 is covalently cross-linked (Isoglutamyl lysine isopeptide (Lys-Gln) (interchain with Q-Cter in protein Pup)).

The protein belongs to the class-I pyridoxal-phosphate-dependent aminotransferase family. The cofactor is pyridoxal 5'-phosphate.

The chain is Putative aminotransferase MSMEG_6286/MSMEI_6121 from Mycolicibacterium smegmatis (strain ATCC 700084 / mc(2)155) (Mycobacterium smegmatis).